A 102-amino-acid polypeptide reads, in one-letter code: Small ribosomal subunit protein uS10 (102 aa).

It belongs to the universal ribosomal protein uS10 family. Part of the 30S ribosomal subunit.

Involved in the binding of tRNA to the ribosomes. In Clostridium beijerinckii (strain ATCC 51743 / NCIMB 8052) (Clostridium acetobutylicum), this protein is Small ribosomal subunit protein uS10.